The primary structure comprises 134 residues: Ion transport peptide-like (134 aa).

Intrachain disulfides connect C62/C98, C78/C94, and C81/C107.

Belongs to the arthropod CHH/MIH/GIH/VIH hormone family.

The protein localises to the secreted. The protein is Ion transport peptide-like of Schistocerca gregaria (Desert locust).